A 502-amino-acid polypeptide reads, in one-letter code: Probable malate:quinone oxidoreductase (502 aa).

This sequence belongs to the MQO family. Requires FAD as cofactor.

The enzyme catalyses (S)-malate + a quinone = a quinol + oxaloacetate. It participates in carbohydrate metabolism; tricarboxylic acid cycle; oxaloacetate from (S)-malate (quinone route): step 1/1. This Oceanobacillus iheyensis (strain DSM 14371 / CIP 107618 / JCM 11309 / KCTC 3954 / HTE831) protein is Probable malate:quinone oxidoreductase.